We begin with the raw amino-acid sequence, 114 residues long: Gamma-glutamylcyclotransferase family protein ytfP (114 aa).

It belongs to the gamma-glutamylcyclotransferase family.

The protein resides in the cytoplasm. May play a role in antibiotic biosynthesis. This Citrobacter rodentium (strain ICC168) (Citrobacter freundii biotype 4280) protein is Gamma-glutamylcyclotransferase family protein ytfP (ytfP).